We begin with the raw amino-acid sequence, 123 residues long: ATP synthase epsilon chain (123 aa).

Belongs to the ATPase epsilon chain family. F-type ATPases have 2 components, CF(1) - the catalytic core - and CF(0) - the membrane proton channel. CF(1) has five subunits: alpha(3), beta(3), gamma(1), delta(1), epsilon(1). CF(0) has three main subunits: a, b and c.

It is found in the cell inner membrane. Produces ATP from ADP in the presence of a proton gradient across the membrane. The chain is ATP synthase epsilon chain from Helicobacter pylori (strain G27).